We begin with the raw amino-acid sequence, 593 residues long: ESX-1 secretion system protein EccCb1 (593 aa).

2 consecutive FtsK domains span residues arginine 66 to glutamine 260 and glutamine 350 to aspartate 546. Residues glycine 85–serine 92 and glycine 377–threonine 384 each bind ATP.

In terms of assembly, part of the ESX-1 / type VII secretion system (T7SS), which is composed of cytosolic and membrane components. The ESX-1 membrane complex is composed of EccB1, EccCa1, EccCb1, EccD1 and EccE1.

The protein resides in the cytoplasm. Part of the ESX-1 / type VII specialized secretion system (T7SS), which exports several proteins including EsxA and EsxB. Plays a role in DNA conjugation, in both donor and recipient strains. This chain is ESX-1 secretion system protein EccCb1 (eccCb1), found in Mycolicibacterium smegmatis (strain MKD8) (Mycobacterium smegmatis).